The chain runs to 239 residues: Derlin-2 (239 aa).

Over 1–57 (MAYQSLRLEYLQIPPVSRAYTTACVLTTAAVQLELITPFQLYFNPELIFKHFQIWRL) the chain is Cytoplasmic. A helical transmembrane segment spans residues 58-78 (ITNFLFFGPVGFNFLFNMIFL). Residues 79–96 (YRYCRMLEEGSFRGRTAD) lie on the Lumenal side of the membrane. The helical transmembrane segment at 97–117 (FVFMFLFGGFLMTLFGLFVSL) threads the bilayer. Residues 118–150 (VFLGQAFTIMLVYVWSRRNPYVRMNFFGLLNFQ) lie on the Cytoplasmic side of the membrane. A helical membrane pass occupies residues 151–171 (APFLPWVLMGFSLLLGNSIIV). Asp172 is a topological domain (lumenal). Residues 173-193 (LLGIAVGHIYFFLEDIFPNQP) traverse the membrane as a helical segment. At 194 to 239 (GGIRILKTPSILRTIFDTPDEDPNYNPLPEERPGGFAWGEGQRLGG) the chain is on the cytoplasmic side. Positions 214-239 (EDPNYNPLPEERPGGFAWGEGQRLGG) are disordered. Gly residues predominate over residues 229-239 (FAWGEGQRLGG).

The protein belongs to the derlin family. As to quaternary structure, forms homo- and heterooligomers with DERL3 and, to a lesser extent, with DERL1. Interacts with the SEL1L/SYVN1 and VCP/SELENOS protein complexes. Mediates association between VCP and EDEM1, as well as that between VCP and the misfolded glycoproteins. Interacts with OS9. Interacts with SELENOK and SELENOS. Interacts with the signal recognition particle/SRP and the SRP receptor; in the process of endoplasmic reticulum stress-induced pre-emptive quality control. Interacts with CCDC47. Widely expressed, with lowest levels in brain and heart.

It is found in the endoplasmic reticulum membrane. Its function is as follows. Functional component of endoplasmic reticulum-associated degradation (ERAD) for misfolded lumenal glycoproteins, but not that of misfolded nonglycoproteins. May act by forming a channel that allows the retrotranslocation of misfolded glycoproteins into the cytosol where they are ubiquitinated and degraded by the proteasome. May mediate the interaction between VCP and misfolded glycoproteins. May also be involved in endoplasmic reticulum stress-induced pre-emptive quality control, a mechanism that selectively attenuates the translocation of newly synthesized proteins into the endoplasmic reticulum and reroutes them to the cytosol for proteasomal degradation. This Mus musculus (Mouse) protein is Derlin-2.